We begin with the raw amino-acid sequence, 89 residues long: Small ribosomal subunit protein bS20 (89 aa).

Basic residues predominate over residues 1–12; that stretch reads MANHKSAIKRHR. The interval 1-26 is disordered; the sequence is MANHKSAIKRHRQSVERAGRNRAART.

Belongs to the bacterial ribosomal protein bS20 family.

Binds directly to 16S ribosomal RNA. The sequence is that of Small ribosomal subunit protein bS20 from Desulfovibrio desulfuricans (strain ATCC 27774 / DSM 6949 / MB).